Consider the following 482-residue polypeptide: Magnesium-dependent glutamate N-prenyltransferase (482 aa).

Residues Asn351, Thr355, Glu359, and Phe366 each coordinate Mg(2+).

Belongs to the terpene synthase family. Mg(2+) is required as a cofactor.

It catalyses the reaction (2E)-geranyl diphosphate + L-glutamate = N-geranyl-L-glutamate + diphosphate. It functions in the pathway secondary metabolite biosynthesis. Magnesium-dependent glutamate N-prenyltransferase: part of the gene cluster that mediates the biosynthesis of domoic acid (DA) and derivatives, natural products with neurochemical activity acting as ionotropic glutamate receptor (iGluR) agonists, thus being neurotoxins causing amnesic shellfish poisoning (ASP). Catalyzes the conversion of L-glutamic acid (L-Glu) to N-geranyl-L-glutamic acid (NGG) in the presence of geranyl diphosphate (GPP). Also able to catalyze the formation of farnesyl-L-glutamate from farnesyl diphosphate (FPP). Cannot use dimethylallyl diphosphate (DMAPP) as substrate. This chain is Magnesium-dependent glutamate N-prenyltransferase, found in Pseudo-nitzschia multiseries (Marine planktonic diatom).